The following is a 393-amino-acid chain: DNA-directed RNA polymerase subunit Rpo1C (393 aa).

Belongs to the RNA polymerase beta' chain family. Part of the RNA polymerase complex.

The protein resides in the cytoplasm. The catalysed reaction is RNA(n) + a ribonucleoside 5'-triphosphate = RNA(n+1) + diphosphate. Its function is as follows. DNA-dependent RNA polymerase (RNAP) catalyzes the transcription of DNA into RNA using the four ribonucleoside triphosphates as substrates. Forms part of the jaw domain. The polypeptide is DNA-directed RNA polymerase subunit Rpo1C (Halococcus morrhuae (Micrococcus morrhuae)).